The sequence spans 324 residues: Lactonase drp35 (324 aa).

Residues E47, S109, G111, D129, T132, Y134, D137, N184, D235, and S236 each contribute to the Ca(2+) site. D235 functions as the Proton donor in the catalytic mechanism.

The protein belongs to the SMP-30/CGR1 family. Ca(2+) serves as cofactor.

It is found in the cytoplasm. Its function is as follows. Exhibits lactonase activity. Acts in cells with perturbed membrane integrity and is possibly related to the membrane homeostasis. This Staphylococcus aureus (strain USA300) protein is Lactonase drp35 (drp35).